The primary structure comprises 95 residues: Neurexophilin-3 (95 aa).

Residues Asn1 and Asn7 are each glycosylated (N-linked (GlcNAc...) asparagine). The III stretch occupies residues 1-21 (NATGQGNISISLVPPSKAVEX). An IV (linker domain) region spans residues 22-30 (HQXQQIFIE). Residues 31 to 95 (AKASKIFNCR…YIAFYSTDYR (65 aa)) are v (Cys-rich).

This sequence belongs to the neurexophilin family.

The protein resides in the secreted. In terms of biological role, may be signaling molecules that resemble neuropeptides. Ligand for alpha-neurexins. In Macaca mulatta (Rhesus macaque), this protein is Neurexophilin-3 (NXPH3).